The following is a 279-amino-acid chain: Phosphatidylglycerol--prolipoprotein diacylglyceryl transferase (279 aa).

3 helical membrane-spanning segments follow: residues 18–38 (LSVR…YFVA), 55–75 (IIFY…VIFQ), and 89–109 (IWHG…AGVI). R137 contacts a 1,2-diacyl-sn-glycero-3-phospho-(1'-sn-glycerol). 2 helical membrane-spanning segments follow: residues 203-223 (LGET…FIEG) and 235-255 (IRVA…LIVY).

The protein belongs to the Lgt family.

Its subcellular location is the cell membrane. The enzyme catalyses L-cysteinyl-[prolipoprotein] + a 1,2-diacyl-sn-glycero-3-phospho-(1'-sn-glycerol) = an S-1,2-diacyl-sn-glyceryl-L-cysteinyl-[prolipoprotein] + sn-glycerol 1-phosphate + H(+). The protein operates within protein modification; lipoprotein biosynthesis (diacylglyceryl transfer). Functionally, catalyzes the transfer of the diacylglyceryl group from phosphatidylglycerol to the sulfhydryl group of the N-terminal cysteine of a prolipoprotein, the first step in the formation of mature lipoproteins. This chain is Phosphatidylglycerol--prolipoprotein diacylglyceryl transferase, found in Staphylococcus aureus (strain bovine RF122 / ET3-1).